Reading from the N-terminus, the 429-residue chain is Enolase (429 aa).

A (2R)-2-phosphoglycerate-binding site is contributed by Gln163. Glu205 (proton donor) is an active-site residue. The Mg(2+) site is built by Asp242, Glu286, and Asp313. Residues Lys338, Arg367, Ser368, and Lys389 each coordinate (2R)-2-phosphoglycerate. Lys338 acts as the Proton acceptor in catalysis.

This sequence belongs to the enolase family. Mg(2+) is required as a cofactor.

The protein resides in the cytoplasm. It localises to the secreted. Its subcellular location is the cell surface. The enzyme catalyses (2R)-2-phosphoglycerate = phosphoenolpyruvate + H2O. The protein operates within carbohydrate degradation; glycolysis; pyruvate from D-glyceraldehyde 3-phosphate: step 4/5. Its function is as follows. Catalyzes the reversible conversion of 2-phosphoglycerate (2-PG) into phosphoenolpyruvate (PEP). It is essential for the degradation of carbohydrates via glycolysis. The chain is Enolase from Pelobacter propionicus (strain DSM 2379 / NBRC 103807 / OttBd1).